The primary structure comprises 126 residues: Large ribosomal subunit protein bL12 (126 aa).

This sequence belongs to the bacterial ribosomal protein bL12 family. Homodimer. Part of the ribosomal stalk of the 50S ribosomal subunit. Forms a multimeric L10(L12)X complex, where L10 forms an elongated spine to which 2 to 4 L12 dimers bind in a sequential fashion. Binds GTP-bound translation factors.

Functionally, forms part of the ribosomal stalk which helps the ribosome interact with GTP-bound translation factors. Is thus essential for accurate translation. This is Large ribosomal subunit protein bL12 from Prosthecochloris aestuarii (strain DSM 271 / SK 413).